Reading from the N-terminus, the 149-residue chain is Transcriptional repressor NrdR (149 aa).

Residues 3-34 (CPFCAAVDTKVIDSRLVGDGSQVRRRRQCLEC) fold into a zinc finger. An ATP-cone domain is found at 49–139 (PRVIKSDDIR…VYRSFEDIRE (91 aa)).

It belongs to the NrdR family. The cofactor is Zn(2+).

Functionally, negatively regulates transcription of bacterial ribonucleotide reductase nrd genes and operons by binding to NrdR-boxes. The sequence is that of Transcriptional repressor NrdR from Photorhabdus laumondii subsp. laumondii (strain DSM 15139 / CIP 105565 / TT01) (Photorhabdus luminescens subsp. laumondii).